We begin with the raw amino-acid sequence, 192 residues long: uncharacterized protein (192 aa).

A signal peptide spans M1 to L17.

This is an uncharacterized protein from Caenorhabditis elegans.